A 167-amino-acid polypeptide reads, in one-letter code: Small ribosomal subunit protein uS3m (167 aa).

The N-terminal 35 residues, 1-35 (MAWSASVRGLGQRVLACSRELPGAWRTLHTSAVCA), are a transit peptide targeting the mitochondrion.

It belongs to the universal ribosomal protein uS3 family. In terms of assembly, component of the mitochondrial ribosome small subunit (28S) which comprises a 12S rRNA and about 30 distinct proteins.

The protein localises to the mitochondrion. This Mus musculus (Mouse) protein is Small ribosomal subunit protein uS3m (Mrps24).